The following is a 430-amino-acid chain: Small ribosomal subunit protein uS9m (430 aa).

Residues 1-34 (MLSRLFLRHSNLRFVTLVSSKSNSQIFSSFIRPL) constitute a mitochondrion transit peptide. A disordered region spans residues 32–97 (RPLSTNSSGG…GGEGKWPEEP (66 aa)). The span at 39–48 (SGGGGNGDGN) shows a compositional bias: gly residues. Over residues 68–79 (GPFSSDDSFGSS) the composition is skewed to low complexity. Gly residues predominate over residues 80-91 (GVAGSGLPGGEG).

Belongs to the universal ribosomal protein uS9 family. As to quaternary structure, interacts (via C terminus) with PIA2. Component of the mitochondrial ribosome small subunit. Expressed in root tips, young leaves, flowers and siliques.

The protein localises to the mitochondrion. Functionally, mitochondrial ribosomal protein required for central cell maturation. May work together with PIA2 in controlling female gametophyte development, possibly by regulating the expression of some mitochondrial proteins. This chain is Small ribosomal subunit protein uS9m, found in Arabidopsis thaliana (Mouse-ear cress).